The chain runs to 971 residues: MNNEALAEDPPTPLWELVLEQFKDQLVLILLGSAAVSFVLALFEEGDDWTAFVDPVVILTILILNAVVGVTQESSAEKAIAALQEYSANEATVVRDGKTQRIKAEDLVPGDIIHIGVGDRVPADCRLLAIQSNSFRVDQAVLTGESESVSKDTRSIKDEQAVKQDQTNILFSGTSVVNGHATAIVVLTGASTAIGGIHESITSQISEPTPLKQKLNDFGDMLAKVITVICVLVWLINVEHFNDPAHGGWAKGAIYYLKIAVSLGVAAIPEGLAVVITTCLALGTRKMAAKNAVVRSLPSVETLGSCSVICSDKTGTLTTNQMSVEKLVYLNASGDDLEEIDVEGTTFAPEGKLSRNGKVLQNLAVTSSTVRQMAEVMALCNSATLAHDPKSGTFSCIGEPTEGALRVLVEKIGTDDMATNEKLFRLPASQRLHVSSAHYESRLPLLATYEFSRDRKSMSVLVTKDKAQRLLVKGAPESILERCSYVLLGPDGPRVPLTRVYSDLLAREVVEYGNRGLRVIALASVDDIADNPLLHNAQTTEEYAQLERNMTLIGLVGMLDPPRTEVADSVKKCRAAGIRVIVITGDNRNTAESICRQIGVFGEDEDLTGKSFTGREFDALSESEKLEAVKKASLFSRTEPSHKSKLVDLLQSLGHVVAMTGDGVNDAPALKKADIGVAMGTGTDVAKLAADMVLTDDNFATITVAVEEGRSIYSNTQQFIRYLISSNIGEVVSIFLTAALGMPEALIPVQLLWVNLVTDGLPATALSFNPPDHDVMRRAPRKRDEPLVGGWLLFRYLAIGTYVGAATVFGYIWWFVYNPEGPQISFWQLSHFHKCSAQFPEIGCEMFSNEMSRSASTVSLSILVVIEMLNAMNALSSSESLLAFPLWNNMMLVYAIILSMTLHFAILYIPFLQTLFSILPLNWTEWKAVLAISAPVVAIDELLKYAERRLYTLPAIAGEQQNGVAFKPKKA.

Residues 1-25 (MNNEALAEDPPTPLWELVLEQFKDQ) lie on the Cytoplasmic side of the membrane. A helical transmembrane segment spans residues 26–46 (LVLILLGSAAVSFVLALFEEG). Topologically, residues 47-49 (DDW) are lumenal. Residues 50–70 (TAFVDPVVILTILILNAVVGV) form a helical membrane-spanning segment. At 71-217 (TQESSAEKAI…PTPLKQKLND (147 aa)) the chain is on the cytoplasmic side. The helical transmembrane segment at 218-238 (FGDMLAKVITVICVLVWLINV) threads the bilayer. Over 239 to 262 (EHFNDPAHGGWAKGAIYYLKIAVS) the chain is Lumenal. Residues 263–283 (LGVAAIPEGLAVVITTCLALG) form a helical membrane-spanning segment. Residues valine 265, alanine 266, isoleucine 268, and glutamate 270 each coordinate Ca(2+). The Cytoplasmic segment spans residues 284 to 718 (TRKMAAKNAV…GRSIYSNTQQ (435 aa)). Aspartate 312 acts as the 4-aspartylphosphate intermediate in catalysis. Residues aspartate 312 and threonine 314 each coordinate Mg(2+). Residues threonine 314, glutamate 402, arginine 453, lysine 473, arginine 518, arginine 637, and lysine 643 each contribute to the ATP site. A Mg(2+)-binding site is contributed by aspartate 662. Asparagine 665 lines the ATP pocket. Residues 719-741 (FIRYLISSNIGEVVSIFLTAALG) form a helical membrane-spanning segment. Positions 727 and 730 each coordinate Ca(2+). Residues 742–750 (MPEALIPVQ) lie on the Lumenal side of the membrane. A helical membrane pass occupies residues 751 to 770 (LLWVNLVTDGLPATALSFNP). Ca(2+) contacts are provided by asparagine 755, threonine 758, and aspartate 759. Topologically, residues 771–795 (PDHDVMRRAPRKRDEPLVGGWLLFR) are cytoplasmic. The helical transmembrane segment at 796–816 (YLAIGTYVGAATVFGYIWWFV) threads the bilayer. Topologically, residues 817–854 (YNPEGPQISFWQLSHFHKCSAQFPEIGCEMFSNEMSRS) are lumenal. The helical transmembrane segment at 855–875 (ASTVSLSILVVIEMLNAMNAL) threads the bilayer. Glutamate 867 serves as a coordination point for Ca(2+). Over 876–891 (SSSESLLAFPLWNNMM) the chain is Cytoplasmic. Residues 892–912 (LVYAIILSMTLHFAILYIPFL) form a helical membrane-spanning segment. Residues 913–917 (QTLFS) lie on the Lumenal side of the membrane. Residues 918–938 (ILPLNWTEWKAVLAISAPVVA) traverse the membrane as a helical segment. Residues 939–971 (IDELLKYAERRLYTLPAIAGEQQNGVAFKPKKA) lie on the Cytoplasmic side of the membrane.

Belongs to the cation transport ATPase (P-type) (TC 3.A.3) family. Mg(2+) is required as a cofactor.

The protein localises to the endoplasmic reticulum membrane. The catalysed reaction is Ca(2+)(in) + ATP + H2O = Ca(2+)(out) + ADP + phosphate + H(+). Its function is as follows. Magnesium-dependent enzyme catalyzes the hydrolysis of ATP coupled with the translocation of calcium from the cytosol to the endoplasmic reticulum lumen. Its activity is coupled to the unfolded protein response (UPR) and Ca(2+) import into the endoplasmioc reticulum is important for redox homeostasis, virulence, cell wall biosynthesis, and resistance to antifungal compounds that inhibit Ca2+ signaling. With pmrA, promotes radial growth and conidiation. The sequence is that of Endoplasmic reticulum calcium ATPase srcA (srcA) from Aspergillus fumigatus (strain ATCC MYA-4609 / CBS 101355 / FGSC A1100 / Af293) (Neosartorya fumigata).